The following is a 1116-amino-acid chain: Protein STICHEL-like 1 (1116 aa).

Disordered stretches follow at residues 95-138 (RTSS…LEET) and 225-244 (KFLR…NSTP). Acidic residues predominate over residues 115 to 124 (NDDDDDDDDV). Short sequence motifs (PEST) lie at residues 257-282 (RNPS…FKGR) and 402-422 (KSQD…ESIQ). 463 to 470 (GPRGTGKT) lines the ATP pocket. Residues Cys482, Cys492, Cys495, and Cys498 each coordinate Zn(2+). The stretch at 726–760 (EAFLDRRNLTEADLERLKHALKLLSEAEKQLRVST) forms a coiled coil. The interval 777-798 (PSPGTTHTGSSRRQSSRATEES) is disordered. The span at 778 to 793 (SPGTTHTGSSRRQSSR) shows a compositional bias: polar residues.

Belongs to the DnaX/STICHEL family.

In Arabidopsis thaliana (Mouse-ear cress), this protein is Protein STICHEL-like 1.